We begin with the raw amino-acid sequence, 454 residues long: Exopolyphosphatase PRUNE1 (454 aa).

Residue Met1 is modified to N-acetylmethionine. Mn(2+)-binding residues include Asp28, Asp30, Asp106, and Asp179. The short motif at 106–108 (DHH) is the DHH motif element. Residues 394–421 (SLISGLSQDEEDPPLPPTPMNSLVDECP) are essential for homodimerization. The tract at residues 397 to 420 (SGLSQDEEDPPLPPTPMNSLVDEC) is disordered. Ser400 is modified (phosphoserine). Thr411 carries the phosphothreonine modification. At Ser415 the chain carries Phosphoserine.

It belongs to the PPase class C family. Prune subfamily. Homooligomer. Able to homodimerize via its C-terminal domain. Interacts with NME1. Interacts with GSK3; at focal adhesion complexes where paxillin and vinculin are colocalized. Interacts with alpha and beta tubulin. Mn(2+) is required as a cofactor.

The protein resides in the cytoplasm. Its subcellular location is the nucleus. It is found in the cell junction. It localises to the focal adhesion. The enzyme catalyses diphosphate + H2O = 2 phosphate + H(+). Activated by magnesium ions and inhibited by manganese ions. Inhibited by dipyridamole, moderately sensitive to IBMX and inhibited by vinpocetine. Its function is as follows. Phosphodiesterase (PDE) that has higher activity toward cAMP than cGMP, as substrate. Plays a role in cell proliferation, migration and differentiation, and acts as a negative regulator of NME1. Plays a role in the regulation of neurogenesis. Involved in the regulation of microtubule polymerization. The sequence is that of Exopolyphosphatase PRUNE1 (Prune1) from Mus musculus (Mouse).